Reading from the N-terminus, the 250-residue chain is Iron-sulfur assembly protein 1 (250 aa).

Residues 54–89 form a disordered region; that stretch reads AADSVSPDSQRPGKKPFKFIVSNQSKSSKASKSPKW. The segment covering 75 to 89 has biased composition (low complexity); sequence SNQSKSSKASKSPKW. Residues C178, C242, and C244 each contribute to the Fe cation site.

It belongs to the HesB/IscA family.

Its subcellular location is the mitochondrion matrix. Functionally, involved in the assembly of mitochondrial and cytoplasmic iron-sulfur proteins. Probably involved in the binding of an intermediate of Fe/S cluster assembly. The polypeptide is Iron-sulfur assembly protein 1 (ISA1) (Saccharomyces cerevisiae (strain ATCC 204508 / S288c) (Baker's yeast)).